The chain runs to 236 residues: Probable metal transport system ATP-binding protein CT_416 (236 aa).

Residues 5-236 (MLLENVSFRY…FCCNTFGRCP (232 aa)) enclose the ABC transporter domain. 39–46 (GPNGGGKT) contacts ATP.

Belongs to the ABC transporter superfamily.

The protein localises to the cell inner membrane. Functionally, part of an ATP-driven transport system CT_415/CT_416/CT_417 for a metal. Probably responsible for energy coupling to the transport system. The polypeptide is Probable metal transport system ATP-binding protein CT_416 (Chlamydia trachomatis serovar D (strain ATCC VR-885 / DSM 19411 / UW-3/Cx)).